The following is a 433-amino-acid chain: Protein disulfide-isomerase A6 homolog (433 aa).

The signal sequence occupies residues 1 to 19 (MRQLASILLLAFVVGSVSA). Thioredoxin domains are found at residues 20 to 119 (FYSP…GQRT) and 120 to 267 (AKAI…KHVA). Active-site nucleophile residues include C55, C58, C186, and C189. 2 disulfide bridges follow: C55–C58 and C186–C189. The N-linked (GlcNAc...) asparagine glycan is linked to N279. The disordered stretch occupies residues 405-433 (VDPWDGKDGQLPTEEDIDLSDIDLDKDEL). Residues 417–433 (TEEDIDLSDIDLDKDEL) show a composition bias toward acidic residues. The short motif at 430–433 (KDEL) is the Prevents secretion from ER element.

Belongs to the protein disulfide isomerase family. As to quaternary structure, interacts with Drpr (via extracellular region). In the blastoderm embryo, expression starts at the anterior and posterior poles and later appears as broad stripes. Following gastrulation, expressed in midline precursor cells and the posterior head with low levels present throughout the embryo. During germ band extension, weak dorsoventral stripes of expression are evident. Midline expression begins and is retained throughout embryogenesis in clusters of cells in each segment in the central nervous system. At least some of the midline expression occurs in VUM neurons.

The protein resides in the endoplasmic reticulum lumen. It is found in the cell surface. The enzyme catalyses Catalyzes the rearrangement of -S-S- bonds in proteins.. Binds to both apoptotic cells and phagocytes and promotes Drpr-dependent phagocytosis of apoptotic cells. The chain is Protein disulfide-isomerase A6 homolog from Drosophila melanogaster (Fruit fly).